The following is a 692-amino-acid chain: Glycogen phosphorylase (692 aa).

Position 586 is an N6-(pyridoxal phosphate)lysine (lysine 586).

The protein belongs to the glycogen phosphorylase family. Requires pyridoxal 5'-phosphate as cofactor.

The catalysed reaction is [(1-&gt;4)-alpha-D-glucosyl](n) + phosphate = [(1-&gt;4)-alpha-D-glucosyl](n-1) + alpha-D-glucose 1-phosphate. Functionally, phosphorylase is an important allosteric enzyme in carbohydrate metabolism. Enzymes from different sources differ in their regulatory mechanisms and in their natural substrates. However, all known phosphorylases share catalytic and structural properties. The polypeptide is Glycogen phosphorylase (glgP) (Aquifex aeolicus (strain VF5)).